A 137-amino-acid chain; its full sequence is MSAHLQWMVVRNCSSFLIKRNKQTYSTEPNNLKARNSFRYNGLIHRKTVGVEPAADGKGVVVVMKRRSGQRKPATSYVRTTINKNARATLSSIRHMIRKNKYRPDLRMAAIRRASAILRSQKPVVVKRKRTRPTKSS.

S2 carries the N-acetylserine modification. Residues K58 and K65 each participate in a glycyl lysine isopeptide (Lys-Gly) (interchain with G-Cter in SUMO2) cross-link. Residue S115 is modified to Phosphoserine.

The protein belongs to the eukaryotic ribosomal protein eL28 family. In terms of assembly, component of the large ribosomal subunit.

It is found in the cytoplasm. Component of the large ribosomal subunit. The ribosome is a large ribonucleoprotein complex responsible for the synthesis of proteins in the cell. The protein is Large ribosomal subunit protein eL28 (Rpl28) of Mus musculus (Mouse).